We begin with the raw amino-acid sequence, 262 residues long: tRNA pseudouridine synthase A (262 aa).

The active-site Nucleophile is aspartate 55. Residue tyrosine 116 coordinates substrate.

It belongs to the tRNA pseudouridine synthase TruA family. As to quaternary structure, homodimer.

It carries out the reaction uridine(38/39/40) in tRNA = pseudouridine(38/39/40) in tRNA. Functionally, formation of pseudouridine at positions 38, 39 and 40 in the anticodon stem and loop of transfer RNAs. The protein is tRNA pseudouridine synthase A of Bdellovibrio bacteriovorus (strain ATCC 15356 / DSM 50701 / NCIMB 9529 / HD100).